We begin with the raw amino-acid sequence, 638 residues long: Phosphomethylpyrimidine synthase (638 aa).

Substrate contacts are provided by residues Asn236, Met265, Tyr294, His330, 350-352 (SRG), 391-394 (DGLR), and Glu430. His434 contributes to the Zn(2+) binding site. Residue Tyr457 coordinates substrate. Residue His498 coordinates Zn(2+). Residues Cys578, Cys581, and Cys586 each coordinate [4Fe-4S] cluster.

Belongs to the ThiC family. In terms of assembly, homodimer. The cofactor is [4Fe-4S] cluster.

The catalysed reaction is 5-amino-1-(5-phospho-beta-D-ribosyl)imidazole + S-adenosyl-L-methionine = 4-amino-2-methyl-5-(phosphooxymethyl)pyrimidine + CO + 5'-deoxyadenosine + formate + L-methionine + 3 H(+). It participates in cofactor biosynthesis; thiamine diphosphate biosynthesis. Catalyzes the synthesis of the hydroxymethylpyrimidine phosphate (HMP-P) moiety of thiamine from aminoimidazole ribotide (AIR) in a radical S-adenosyl-L-methionine (SAM)-dependent reaction. The protein is Phosphomethylpyrimidine synthase of Polaromonas sp. (strain JS666 / ATCC BAA-500).